A 247-amino-acid polypeptide reads, in one-letter code: Lys-63-specific deubiquitinase BRCC36 (247 aa).

The residue at position 2 (alanine 2) is an N-acetylalanine. An MPN domain is found at valine 12–glutamine 179. Positions 122, 124, and 135 each coordinate Zn(2+). The JAMM motif motif lies at histidine 122 to aspartate 135. Serine 189 carries the phosphoserine modification.

It belongs to the peptidase M67A family. BRCC36 subfamily. In terms of assembly, component of the ARISC complex, at least composed of UIMC1/RAP80, ABRAXAS1, BRCC3/BRCC36, BABAM2 and BABAM1/NBA1. Component of the BRCA1-A complex, at least composed of BRCA1, BARD1, UIMC1/RAP80, ABRAXAS1, BRCC3/BRCC36, BABAM2 and BABAM1/NBA1. In the BRCA1-A complex, interacts directly with ABRAXAS1 and BABAM2. Component of the BRISC complex, at least composed of ABRAXAS2, BRCC3/BRCC36, BABAM2 and BABAM1/NBA1. Identified in a complex with SHMT2 and the other subunits of the BRISC complex. In the BRISC complex, interacts directly with ABRAXAS2. Identified in a complex with ABRAXAS2 and NUMA1. The BRISC complex interacts with the CSN complex. Component of the BRCA1/BRCA2 containing complex (BRCC), which also contains BRCA1, BRCA2, BARD1, BABAM2 and RAD51. BRCC is a ubiquitin E3 ligase complex that enhances cellular survival following DNA damage. Interacts with BRCA1. Binds polyubiquitin. Interacts with PWWP2B. Interacts with HDAC1; this interaction is enhanced in the presence of PWWP2B. Zn(2+) serves as cofactor.

The protein localises to the nucleus. Its subcellular location is the cytoplasm. It is found in the cytoskeleton. The protein resides in the spindle pole. Metalloprotease that specifically cleaves 'Lys-63'-linked polyubiquitin chains. Does not have activity toward 'Lys-48'-linked polyubiquitin chains. Component of the BRCA1-A complex, a complex that specifically recognizes 'Lys-63'-linked ubiquitinated histones H2A and H2AX at DNA lesions sites, leading to target the BRCA1-BARD1 heterodimer to sites of DNA damage at double-strand breaks (DSBs). In the BRCA1-A complex, it specifically removes 'Lys-63'-linked ubiquitin on histones H2A and H2AX, antagonizing the RNF8-dependent ubiquitination at double-strand breaks (DSBs). Catalytic subunit of the BRISC complex, a multiprotein complex that specifically cleaves 'Lys-63'-linked ubiquitin in various substrates. Mediates the specific 'Lys-63'-specific deubiquitination associated with the COP9 signalosome complex (CSN), via the interaction of the BRISC complex with the CSN complex. The BRISC complex is required for normal mitotic spindle assembly and microtubule attachment to kinetochores via its role in deubiquitinating NUMA1. Plays a role in interferon signaling via its role in the deubiquitination of the interferon receptor IFNAR1; deubiquitination increases IFNAR1 activity by enhancing its stability and cell surface expression. Acts as a regulator of the NLRP3 inflammasome by mediating deubiquitination of NLRP3, leading to NLRP3 inflammasome assembly. Down-regulates the response to bacterial lipopolysaccharide (LPS) via its role in IFNAR1 deubiquitination. Deubiquitinates HDAC1 and PWWP2B leading to their stabilization. This chain is Lys-63-specific deubiquitinase BRCC36 (BRCC3), found in Pongo abelii (Sumatran orangutan).